The sequence spans 356 residues: Phosphate acyltransferase (356 aa).

This sequence belongs to the PlsX family. In terms of assembly, homodimer. Probably interacts with PlsY.

It is found in the cytoplasm. It carries out the reaction a fatty acyl-[ACP] + phosphate = an acyl phosphate + holo-[ACP]. It participates in lipid metabolism; phospholipid metabolism. In terms of biological role, catalyzes the reversible formation of acyl-phosphate (acyl-PO(4)) from acyl-[acyl-carrier-protein] (acyl-ACP). This enzyme utilizes acyl-ACP as fatty acyl donor, but not acyl-CoA. This chain is Phosphate acyltransferase, found in Escherichia coli (strain 55989 / EAEC).